Here is a 227-residue protein sequence, read N- to C-terminus: Ribosomal RNA large subunit methyltransferase E (227 aa).

Residues Gly-78, Trp-80, Asp-103, Asp-119, and Asp-143 each contribute to the S-adenosyl-L-methionine site. Residue Lys-183 is the Proton acceptor of the active site.

It belongs to the class I-like SAM-binding methyltransferase superfamily. RNA methyltransferase RlmE family.

It localises to the cytoplasm. The enzyme catalyses uridine(2552) in 23S rRNA + S-adenosyl-L-methionine = 2'-O-methyluridine(2552) in 23S rRNA + S-adenosyl-L-homocysteine + H(+). Its function is as follows. Specifically methylates the uridine in position 2552 of 23S rRNA at the 2'-O position of the ribose in the fully assembled 50S ribosomal subunit. The sequence is that of Ribosomal RNA large subunit methyltransferase E from Rickettsia bellii (strain RML369-C).